The primary structure comprises 251 residues: SRR1-like protein (251 aa).

The protein belongs to the SRR1 family.

The protein resides in the cytoplasm. The protein localises to the nucleus. In Schizosaccharomyces pombe (strain 972 / ATCC 24843) (Fission yeast), this protein is SRR1-like protein.